Here is a 55-residue protein sequence, read N- to C-terminus: ATP synthase small subunit 6, mitochondrial (55 aa).

A mitochondrion-targeting transit peptide spans 1 to 15; the sequence is MRQFDPWPVFFRREW. A helical membrane pass occupies residues 20-39; that stretch reads PFLVGFAVTGAIITKMSLGF.

This sequence belongs to the ATPase 6 subunit family.

Its subcellular location is the mitochondrion inner membrane. Mitochondrial membrane ATP synthase (F(1)F(0) ATP synthase or Complex V) produces ATP from ADP in the presence of a proton gradient across the membrane which is generated by electron transport complexes of the respiratory chain. F-type ATPases consist of two structural domains, F(1) - containing the extramembraneous catalytic core and F(0) - containing the membrane proton channel, linked together by a central stalk and a peripheral stalk. During catalysis, ATP synthesis in the catalytic domain of F(1) is coupled via a rotary mechanism of the central stalk subunits to proton translocation. Part of the complex F(0) domain. Confers tolerance to several abiotic stresses (e.g. salt, mannitol, drought, oxidative and cold stresses), probably by providing additional energy needed for cell homeostasis. This is ATP synthase small subunit 6, mitochondrial from Solanum tuberosum (Potato).